The sequence spans 252 residues: Chitooligosaccharide deacetylase (252 aa).

2 residues coordinate Mg(2+): His-61 and His-125.

The protein belongs to the YdjC deacetylase family. ChbG subfamily. As to quaternary structure, homodimer. Mg(2+) is required as a cofactor.

It localises to the cytoplasm. It carries out the reaction N,N'-diacetylchitobiose + H2O = N-acetyl-beta-D-glucosaminyl-(1-&gt;4)-D-glucosamine + acetate. The enzyme catalyses diacetylchitobiose-6'-phosphate + H2O = N'-monoacetylchitobiose-6'-phosphate + acetate. It functions in the pathway glycan degradation; chitin degradation. In terms of biological role, involved in the degradation of chitin. ChbG is essential for growth on the acetylated chitooligosaccharides chitobiose and chitotriose but is dispensable for growth on cellobiose and chitosan dimer, the deacetylated form of chitobiose. Deacetylation of chitobiose-6-P and chitotriose-6-P is necessary for both the activation of the chb promoter by the regulatory protein ChbR and the hydrolysis of phosphorylated beta-glucosides by the phospho-beta-glucosidase ChbF. Catalyzes the removal of only one acetyl group from chitobiose-6-P to yield monoacetylchitobiose-6-P, the inducer of ChbR and the substrate of ChbF. This Escherichia fergusonii (strain ATCC 35469 / DSM 13698 / CCUG 18766 / IAM 14443 / JCM 21226 / LMG 7866 / NBRC 102419 / NCTC 12128 / CDC 0568-73) protein is Chitooligosaccharide deacetylase.